The chain runs to 318 residues: 5'-3' exonuclease (318 aa).

Residues 194-278 enclose the 5'-3' exonuclease domain; sequence AYAELALLRG…ATDAPVTLST (85 aa).

5'-3' exonuclease acting preferentially on double-stranded DNA. This Mycobacterium tuberculosis (strain ATCC 25618 / H37Rv) protein is 5'-3' exonuclease.